An 852-amino-acid chain; its full sequence is Probable inorganic carbon transporter subunit DabA (852 aa).

Zn(2+)-binding residues include Cys-370, Asp-372, His-554, and Cys-569.

The protein belongs to the inorganic carbon transporter (TC 9.A.2) DabA family. As to quaternary structure, forms a complex with DabB. Requires Zn(2+) as cofactor.

The protein localises to the cell inner membrane. In terms of biological role, part of an energy-coupled inorganic carbon pump. In Novosphingobium aromaticivorans (strain ATCC 700278 / DSM 12444 / CCUG 56034 / CIP 105152 / NBRC 16084 / F199), this protein is Probable inorganic carbon transporter subunit DabA.